The primary structure comprises 163 residues: Superoxide dismutase [Mn] (163 aa).

Mn(2+) contacts are provided by His-2, His-50, Asp-134, and His-138.

It belongs to the iron/manganese superoxide dismutase family. Mn(2+) serves as cofactor.

It catalyses the reaction 2 superoxide + 2 H(+) = H2O2 + O2. Its function is as follows. Destroys superoxide anion radicals which are normally produced within the cells and which are toxic to biological systems. The polypeptide is Superoxide dismutase [Mn] (sodA) (Mycobacterium scrofulaceum).